The chain runs to 309 residues: Olfactory receptor 8U1 (309 aa).

Over 1–25 (MAHINCTQATEFILVGLTDHQELKM) the chain is Extracellular. N-linked (GlcNAc...) asparagine glycosylation occurs at Asn5. The helical transmembrane segment at 26-46 (PLFVLFLSIYLFTVVGNLGLI) threads the bilayer. Over 47–54 (LLIRADTS) the chain is Cytoplasmic. The chain crosses the membrane as a helical span at residues 55–75 (LNTPMYFFLSNLAFVDFCYSS). Residues 76–99 (VITPKMLGNFLYKQNVISFDACAT) lie on the Extracellular side of the membrane. A disulfide bridge connects residues Cys97 and Cys189. The chain crosses the membrane as a helical span at residues 100-120 (QLGCFLTFMISESLLLASMAY). Over 121–139 (DRYVAICNPLLYMVVMTPG) the chain is Cytoplasmic. The helical transmembrane segment at 140–160 (ICIQLVAVPYSYSFLMALFHT) threads the bilayer. Topologically, residues 161–197 (ILTFRLSYCHSNIVNHFYCDDMPLLRLTCSDTRFKQL) are extracellular. The chain crosses the membrane as a helical span at residues 198–217 (WIFACAGIMFISSLLIVFVS). At 218 to 237 (YMFIISAILRMHSAEGRQKA) the chain is on the cytoplasmic side. The chain crosses the membrane as a helical span at residues 238–258 (FSTCGSHMLAVTIFYGTLIFM). Topologically, residues 259 to 271 (YLQPSSSHALDTD) are extracellular. Residues 272–292 (KMASVFYTVIIPMLNPLIYSL) form a helical membrane-spanning segment. Residues 293–309 (QNKEVKEALKKIIINKN) are Cytoplasmic-facing.

The protein belongs to the G-protein coupled receptor 1 family.

It is found in the cell membrane. Odorant receptor. This chain is Olfactory receptor 8U1 (OR8U1), found in Homo sapiens (Human).